Here is an 895-residue protein sequence, read N- to C-terminus: ABC-transporter-regulating transcription factor (895 aa).

The zn(2)-C6 fungal-type DNA-binding region spans 69 to 96 (CDMCRKKKIKCDGKMPKCSHCTNYKTDC). Residues 156–218 (HASGSNTPHN…QKESETEVEG (63 aa)) form a disordered region. Residues 158 to 207 (SGSNTPHNPQKINIPSQSQIAMSQQNSSSHYSTPRLESQSSPRTAATSPE) are compositionally biased toward polar residues. Residues 648–668 (CVWLILYYPVSALVTLFANIL) traverse the membrane as a helical segment. The segment at 726–813 (ESYSKKKRKS…TGVSTNIPPN (88 aa)) is disordered. Low complexity predominate over residues 755–765 (PSTTQPTQAPS).

Interacts with ncaA.

Its subcellular location is the nucleus. It localises to the membrane. In terms of biological role, transcription factor that regulates expression of the genes related to ergosterol biosynthesis, including erg3B, erg24A, erg25A, as well as cyp51A that encodes a target protein of azoles. In coordination with ffmA and ncaA, is responsible for the expression of the ABC transporter abcC/cdr1B/abcG1 related to azole resistance. Directly binds both the cyp51A and abcC/cdr1B/abcG1 promoters at a conserved 34 bp region called the atrR response element (ATRE). AtrR also binds to the promoter regions of both the sterol response transcription factor srbA and atrR genes themselves, the latter suggesting the possibility that atrR is autoregulated. Also regulates iron uptake, most likely via cooperation with SrbA. AtrR is necessary for hypoxia adaptation and virulence. The chain is ABC-transporter-regulating transcription factor from Aspergillus fumigatus (strain ATCC MYA-4609 / CBS 101355 / FGSC A1100 / Af293) (Neosartorya fumigata).